Here is a 282-residue protein sequence, read N- to C-terminus: NADPH-dependent 7-cyano-7-deazaguanine reductase (282 aa).

88–90 (IES) is a binding site for substrate. Residue 90 to 91 (SK) participates in NADPH binding. The active-site Thioimide intermediate is cysteine 190. Residue aspartate 197 is the Proton donor of the active site. 229–230 (HE) is a binding site for substrate. 258 to 259 (RG) serves as a coordination point for NADPH.

Belongs to the GTP cyclohydrolase I family. QueF type 2 subfamily. As to quaternary structure, homodimer.

The protein localises to the cytoplasm. It catalyses the reaction 7-aminomethyl-7-carbaguanine + 2 NADP(+) = 7-cyano-7-deazaguanine + 2 NADPH + 3 H(+). It functions in the pathway tRNA modification; tRNA-queuosine biosynthesis. Its function is as follows. Catalyzes the NADPH-dependent reduction of 7-cyano-7-deazaguanine (preQ0) to 7-aminomethyl-7-deazaguanine (preQ1). This chain is NADPH-dependent 7-cyano-7-deazaguanine reductase, found in Salmonella paratyphi A (strain ATCC 9150 / SARB42).